The following is a 258-amino-acid chain: Shikimate dehydrogenase (NADP(+)) (258 aa).

Shikimate-binding positions include 14–16 (SES) and T61. K65 serves as the catalytic Proton acceptor. N86 and D101 together coordinate shikimate. NADP(+) contacts are provided by residues 125 to 129 (GSGGS) and L211. Y213 is a binding site for shikimate. G234 contributes to the NADP(+) binding site.

This sequence belongs to the shikimate dehydrogenase family. As to quaternary structure, homodimer.

It carries out the reaction shikimate + NADP(+) = 3-dehydroshikimate + NADPH + H(+). It participates in metabolic intermediate biosynthesis; chorismate biosynthesis; chorismate from D-erythrose 4-phosphate and phosphoenolpyruvate: step 4/7. In terms of biological role, involved in the biosynthesis of the chorismate, which leads to the biosynthesis of aromatic amino acids. Catalyzes the reversible NADPH linked reduction of 3-dehydroshikimate (DHSA) to yield shikimate (SA). The chain is Shikimate dehydrogenase (NADP(+)) from Clostridium botulinum (strain 657 / Type Ba4).